A 396-amino-acid polypeptide reads, in one-letter code: Ornithine aminotransferase 2 (396 aa).

At K255 the chain carries N6-(pyridoxal phosphate)lysine.

Belongs to the class-III pyridoxal-phosphate-dependent aminotransferase family. OAT subfamily. The cofactor is pyridoxal 5'-phosphate.

It is found in the cytoplasm. The catalysed reaction is a 2-oxocarboxylate + L-ornithine = L-glutamate 5-semialdehyde + an L-alpha-amino acid. The protein operates within amino-acid biosynthesis; L-proline biosynthesis; L-glutamate 5-semialdehyde from L-ornithine: step 1/1. Functionally, catalyzes the interconversion of ornithine to glutamate semialdehyde. The protein is Ornithine aminotransferase 2 of Staphylococcus saprophyticus subsp. saprophyticus (strain ATCC 15305 / DSM 20229 / NCIMB 8711 / NCTC 7292 / S-41).